We begin with the raw amino-acid sequence, 655 residues long: MARTKCKTKTVANPRTGVRKTAKDLSEPVRQDAVSRRRPTTLPFVGNTSSRPRVFYDVLAKKNVVFPNVKAEYHYRVRNAPKIDPKNFGTTLPICYSSIGPAKTLELRPLGRLPPHIIKALNDHYVQLTRGSMVPAADLYNNGDHPAEQRIPTMLNENEYLRLIQELEEEEKSKQFSATSSSAPHVNPYSAQHLVNGEIIGIFVIYGTGLVTRAVCSQTREMFTAHVLPEWKASKVIDVIRRLQIPTDISSMTADEIRLSELCISKRMEIIKSNDRYILMNPCESATIHSYATERLDEITENDVMSIYQKVVEIVRFCHSRKVILQNFKPRSFYLKKDAHNKWVVRPCFLQDMSCEEDQSEAQFTRRSVCVPFMAPEMLTAESRTHHSYSTELWGLGVLLYILLTGKYPFHENSMPLLFRTIKFKQHRWPFNFISSKSRNIVNMLLKKAPATRMNLEDLWNQVNGDFPEIRCRSNIILKKQDMIVKMDLFEMYYNTYKDRLLPKNVLPMYEEMKACRNDSTILTEMAKRDFRSIQEQMKRRIETKPTEYQTLVMQVRLQQINQLFFEKEVSQAQKQHRAPRLVQLKCSDISKELLLPGDIYPISEHYHPSQQPVDKVVYKLLSDANSLAFPTVMKGTVPKSYPPPVFKGLDISPS.

Residues 1-35 (MARTKCKTKTVANPRTGVRKTAKDLSEPVRQDAVS) form a disordered region. Basic and acidic residues predominate over residues 21–35 (TAKDLSEPVRQDAVS). Residues 200-470 (IGIFVIYGTG…NQVNGDFPEI (271 aa)) enclose the Protein kinase domain. ATP is bound by residues 206–214 (YGTGLVTRA) and lysine 235.

Belongs to the protein kinase superfamily. CAMK Ser/Thr protein kinase family. May interact with transcription factor cebp-1 (via N-terminus). Expressed in epidermis, pharynx, intestine, a subset of head neurons and motoneurons.

Its subcellular location is the nucleus. Functionally, adapter protein that regulates different signaling pathways. Required for larval development and viability. Involved in negatively modulating pmk-1 p38/MAPK signaling. Involved in innate immunity, acting either in a manner dependent upon, or independent of, the pmk-1 or pmk-3 p38/MAPK pathways. Has a protective role in response to infection by the Gram-negative bacterium P.aeruginosa, acting by negatively modulating expression of cebp-1, and regulating the pmk-1 p38/MAPK pathway, leading to activation of transcription factor skn-1. Required to prevent P.aeruginosa toxin ToxA-mediated lethality, probably acting via modulating the effects of translational inhibition caused by the toxin. By regulating the up-regulation in the epidermis of antimicrobial peptides nlp-29 and nlp-31, plays a role in resistance to fungal infection. The protein is Protein nipi-3 of Caenorhabditis elegans.